The chain runs to 490 residues: Protein LMBR1L (490 aa).

Residues 1–21 (MEAPDYEVLSVREQLFHERIR) are Extracellular-facing. Positions 1 to 59 (MEAPDYEVLSVREQLFHERIRECIISTLLFATLYILCHIFLTRFKKPAEFTTVDDEDAT) are interaction with LGB. The segment at 1–76 (MEAPDYEVLS…LCTFTLAIAL (76 aa)) is LCN1-binding. A helical transmembrane segment spans residues 22–42 (ECIISTLLFATLYILCHIFLT). Over 43–66 (RFKKPAEFTTVDDEDATVNKIALE) the chain is Cytoplasmic. A helical transmembrane segment spans residues 67–87 (LCTFTLAIALGAVLLLPFSII). Residues 88–114 (SNEVLLSLPRNYYIQWLNGSLIHGLWN) lie on the Extracellular side of the membrane. The chain crosses the membrane as a helical span at residues 115–135 (LVFLFSNLSLIFLMPFAYFFT). The Cytoplasmic segment spans residues 136–154 (ESEGFAGSRRGVLGRVYET). The helical transmembrane segment at 155–175 (VVMLMLLTLLVLGMVWVASAI) threads the bilayer. At 176-196 (LDNNKASRESLYDFWEYYLPY) the chain is on the extracellular side. A helical membrane pass occupies residues 197 to 217 (LYSCISFLGVLLLLVCTPLGL). Residues 218 to 305 (ARMFSVTGKL…NLGYPLAMLC (88 aa)) are Cytoplasmic-facing. The helical transmembrane segment at 306–326 (LLVLTGLSVLIVAIHILELLI) threads the bilayer. Over 327–350 (DEAAMPRGMQDASLGQVSFSRLGS) the chain is Extracellular. The helical transmembrane segment at 351-371 (FGAVIQVALIFYLMVSSVVGF) threads the bilayer. Residues 372–388 (YSSPLFRSLRPRWHDTA) lie on the Cytoplasmic side of the membrane. A helical transmembrane segment spans residues 389-409 (MTQIIGNCVCLLVLSSALPVF). Topologically, residues 410 to 431 (SRTLGLTRFDLLGDFGRFNWLG) are extracellular. A helical membrane pass occupies residues 432 to 452 (NFYIVFLYNAAFAGLTTLCLV). Topologically, residues 453-490 (KTFTAAVRAELIRAFGLDRLPLPVSGFPPRASRKTQHQ) are cytoplasmic.

It belongs to the LIMR family. As to quaternary structure, dimer. Can also form higher oligomers. Interacts with LCN1; this interaction mediates the endocytosis of LCN1. Interacts with UBAC2, FAF2, VCP, AMFR, ZNRF3, CTNNB1, LRP6, GSK3A, GSK3B, FZD6, DVL2 and RNF43. Interaction with LGB and SCGB1A1 is controversial.

It is found in the cell membrane. It localises to the endoplasmic reticulum membrane. Plays an essential role in lymphocyte development by negatively regulating the canonical Wnt signaling pathway. In association with UBAC2 and E3 ubiquitin-protein ligase AMFR, promotes the ubiquitin-mediated degradation of CTNNB1 and Wnt receptors FZD6 and LRP6. LMBR1L stabilizes the beta-catenin destruction complex that is required for regulating CTNNB1 levels. Acts as a LCN1 receptor and can mediate its endocytosis. This is Protein LMBR1L (LMBR1L) from Pongo abelii (Sumatran orangutan).